We begin with the raw amino-acid sequence, 289 residues long: ATP phosphoribosyltransferase (289 aa).

It belongs to the ATP phosphoribosyltransferase family. Long subfamily. It depends on Mg(2+) as a cofactor.

The protein resides in the cytoplasm. The catalysed reaction is 1-(5-phospho-beta-D-ribosyl)-ATP + diphosphate = 5-phospho-alpha-D-ribose 1-diphosphate + ATP. It participates in amino-acid biosynthesis; L-histidine biosynthesis; L-histidine from 5-phospho-alpha-D-ribose 1-diphosphate: step 1/9. Its activity is regulated as follows. Feedback inhibited by histidine. In terms of biological role, catalyzes the condensation of ATP and 5-phosphoribose 1-diphosphate to form N'-(5'-phosphoribosyl)-ATP (PR-ATP). Has a crucial role in the pathway because the rate of histidine biosynthesis seems to be controlled primarily by regulation of HisG enzymatic activity. The sequence is that of ATP phosphoribosyltransferase from Methanosarcina mazei (strain ATCC BAA-159 / DSM 3647 / Goe1 / Go1 / JCM 11833 / OCM 88) (Methanosarcina frisia).